Consider the following 303-residue polypeptide: Sulfotransferase 6B1 (303 aa).

65–70 provides a ligand contact to 3'-phosphoadenylyl sulfate; the sequence is KCGSNW. The active-site Proton acceptor is His-118. 3'-phosphoadenylyl sulfate is bound by residues Arg-140, Ser-148, Tyr-203, 237 to 242, and 259 to 261; these read STFQAM and RKG.

It belongs to the sulfotransferase 1 family.

The protein localises to the cytoplasm. The protein resides in the cytosol. It catalyses the reaction thyroxine + 3'-phosphoadenylyl sulfate = thyroxine sulfate + adenosine 3',5'-bisphosphate + H(+). Functionally, sulfotransferase that utilizes 3'-phospho-5'-adenylyl sulfate (PAPS) as sulfonate donor to catalyze the sulfate conjugation of thyroxine. Involved in the metabolism of thyroxine. The polypeptide is Sulfotransferase 6B1 (SULT6B1) (Gorilla gorilla gorilla (Western lowland gorilla)).